Reading from the N-terminus, the 152-residue chain is Large ribosomal subunit protein uL15 (152 aa).

The segment at 1-56 (MELNTLKPAKNSVKQNTRYGRGQGSGKGGTSTRGHKGAKSRSGYKSKPGFEGGQLP) is disordered. Over residues 21–31 (RGQGSGKGGTS) the composition is skewed to gly residues. The span at 33 to 44 (RGHKGAKSRSGY) shows a compositional bias: basic residues.

This sequence belongs to the universal ribosomal protein uL15 family. As to quaternary structure, part of the 50S ribosomal subunit.

In terms of biological role, binds to the 23S rRNA. This is Large ribosomal subunit protein uL15 from Amoebophilus asiaticus (strain 5a2).